A 447-amino-acid polypeptide reads, in one-letter code: Serine/threonine-protein phosphatase 2A 55 kDa regulatory subunit B delta isoform (447 aa).

WD repeat units follow at residues 26–65 (AEADIISTVEFNCSGELLATGDKGGRVVIFQREQENKSRP), 91–132 (EIEE…KRVE), 175–213 (AHTYHINSISVNSDHQTYLSADDLRVNLWHLEITDRSFN), 224–264 (ELTE…LCDR), 283–321 (EIISSISDVKFSHSGRYMMTRDYLSVKVWDLNMESRPVE), 338–379 (ENDC…DITL), and 414–447 (DFNKKILHTAWHPTDNIIAVAATNNLYIFQDKVN).

It belongs to the phosphatase 2A regulatory subunit B family. In terms of assembly, PP2A consists of a common heterodimeric core enzyme, composed of a 36 kDa catalytic subunit (subunit C) and a 65 kDa constant regulatory subunit (PR65 or subunit A), that associates with a variety of regulatory subunits. Proteins that associate with the core dimer include three families of regulatory subunits B (the R2/B/PR55/B55, R3/B''/PR72/PR130/PR59 and R5/B'/B56 families), the 48 kDa variable regulatory subunit, viral proteins, and cell signaling molecules. Interacts with ensa (when phosphorylated at 'Ser-67') and arpp19 (when phosphorylated at 'Ser-67'), leading to inhibit PP2A activity.

The protein localises to the cytoplasm. Its function is as follows. Substrate-recognition subunit of protein phosphatase 2A (PP2A) that plays a key role in cell cycle by controlling mitosis entry and exit. The activity of PP2A complexes containing ppp2r2d (PR55-delta) fluctuate during the cell cycle: the activity is high in interphase and low in mitosis. During mitosis, activity of PP2A is inhibited via interaction with phosphorylated ensa and arpp19 inhibitors. PP2A complexes containing ppp2r2d (PR55-delta) also regulate the activity of TGF-beta/Activin/Nodal signaling by restricting receptor activity. Within the PP2A complexes, the B regulatory subunits modulate substrate selectivity and catalytic activity, and may also direct the localization of the catalytic enzyme to a particular subcellular compartment. The polypeptide is Serine/threonine-protein phosphatase 2A 55 kDa regulatory subunit B delta isoform (ppp2r2d) (Xenopus laevis (African clawed frog)).